The following is a 542-amino-acid chain: GMP synthase [glutamine-hydrolyzing] (542 aa).

The region spanning 28 to 218 (MIVILDFGSQ…VYHICECEPT (191 aa)) is the Glutamine amidotransferase type-1 domain. Cysteine 105 functions as the Nucleophile in the catalytic mechanism. Residues histidine 192 and glutamate 194 contribute to the active site. One can recognise a GMPS ATP-PPase domain in the interval 219–417 (WTTEAFVEEA…IGLPEEIVRR (199 aa)). Residue 246–252 (SGGVDSS) coordinates ATP.

Homodimer.

The enzyme catalyses XMP + L-glutamine + ATP + H2O = GMP + L-glutamate + AMP + diphosphate + 2 H(+). It functions in the pathway purine metabolism; GMP biosynthesis; GMP from XMP (L-Gln route): step 1/1. Catalyzes the synthesis of GMP from XMP. The sequence is that of GMP synthase [glutamine-hydrolyzing] from Gloeothece citriformis (strain PCC 7424) (Cyanothece sp. (strain PCC 7424)).